Consider the following 409-residue polypeptide: LL-diaminopimelate aminotransferase (409 aa).

Substrate contacts are provided by tyrosine 15 and glycine 42. Pyridoxal 5'-phosphate contacts are provided by residues tyrosine 72, 108–109, tyrosine 132, asparagine 186, tyrosine 217, and 245–247; these read AK and SFS. Substrate is bound by residues lysine 109, tyrosine 132, and asparagine 186. An N6-(pyridoxal phosphate)lysine modification is found at lysine 248. 2 residues coordinate pyridoxal 5'-phosphate: arginine 256 and asparagine 291. The substrate site is built by asparagine 291 and arginine 386.

Belongs to the class-I pyridoxal-phosphate-dependent aminotransferase family. LL-diaminopimelate aminotransferase subfamily. In terms of assembly, homodimer. Requires pyridoxal 5'-phosphate as cofactor.

It carries out the reaction (2S,6S)-2,6-diaminopimelate + 2-oxoglutarate = (S)-2,3,4,5-tetrahydrodipicolinate + L-glutamate + H2O + H(+). Its pathway is amino-acid biosynthesis; L-lysine biosynthesis via DAP pathway; LL-2,6-diaminopimelate from (S)-tetrahydrodipicolinate (aminotransferase route): step 1/1. In terms of biological role, involved in the synthesis of meso-diaminopimelate (m-DAP or DL-DAP), required for both lysine and peptidoglycan biosynthesis. Catalyzes the direct conversion of tetrahydrodipicolinate to LL-diaminopimelate. This Desulforapulum autotrophicum (strain ATCC 43914 / DSM 3382 / VKM B-1955 / HRM2) (Desulfobacterium autotrophicum) protein is LL-diaminopimelate aminotransferase.